The following is a 308-amino-acid chain: Aldo-keto reductase AKR2E4 (308 aa).

NADP(+) is bound by residues 22 to 29 (GTGRGTAK) and Asp53. Tyr58 functions as the Proton donor in the catalytic mechanism. Residues 158–159 (SN), Arg215, and 259–269 (KSTNKQRIAQN) each bind NADP(+).

Belongs to the short-chain dehydrogenases/reductases (SDR) family. As to expression, detected in hemolymph (at protein level). Detected in larval ovary.

With respect to regulation, subject to substrate inhibition by high levels of 3-dehydroecdysone. Functionally, NADP-dependent oxidoreductase with high 3-dehydroecdysone reductase activity. May play a role in the regulation of molting. Has lower activity with phenylglyoxal and isatin (in vitro). Has no activity with NADH as cosubstrate. Has no activity with nitrobenzaldehyde and 3-hydroxybenzaldehyde. The polypeptide is Aldo-keto reductase AKR2E4 (akr2e) (Bombyx mori (Silk moth)).